The sequence spans 125 residues: Lymphocyte antigen 6 complex locus protein G6c (125 aa).

The first 18 residues, 1-18 (MRALLLLSLSALLCWVSA), serve as a signal peptide directing secretion. One can recognise a UPAR/Ly6 domain in the interval 20–111 (IRCHSCYKLP…PRPTPALTLV (92 aa)). 3 disulfide bridges follow: C22–C47, C25–C33, and C39–C65. An N-linked (GlcNAc...) asparagine glycan is attached at N88. Residues C92 and C97 are joined by a disulfide bond. Residue S99 is the site of GPI-anchor amidated serine attachment. A propeptide spans 100 to 125 (PAPRPTPALTLVFLTSLAGLGLWLLH) (removed in mature form).

N-glycosylated.

It localises to the cell membrane. This is Lymphocyte antigen 6 complex locus protein G6c (LY6G6C) from Bos taurus (Bovine).